The chain runs to 154 residues: Protein X (154 aa).

A mitochondrial targeting sequence region spans residues 68 to 117 (PCALRFTSARRMETTVNAHQFLPKVLYKRTLGLSVMSTTDLEAYFKDCLF).

The protein belongs to the orthohepadnavirus protein X family. In terms of assembly, may form homodimer. May interact with host CEBPA, CFLAR, CREB1, DDB1, E4F1, HBXIP, HSPD1/HSP60, NFKBIA, POLR2E and SMAD4. Interacts with host SMC5-SMC6 complex and induces its degradation. Interacts with host TRPC4AP; leading to prevent ubiquitination of TRPC4AP. Interacts with host PLSCR1; this interaction promotes ubiquitination and degradation of HBx and impairs HBx-mediated cell proliferation. In terms of processing, a fraction may be phosphorylated in insect cells and HepG2 cells, a human hepatoblastoma cell line. Phosphorylated in vitro by host protein kinase C or mitogen-activated protein kinase. N-acetylated in insect cells.

It localises to the host cytoplasm. The protein localises to the host nucleus. Its subcellular location is the host mitochondrion. In terms of biological role, multifunctional protein that plays a role in silencing host antiviral defenses and promoting viral transcription. Does not seem to be essential for HBV infection. May be directly involved in development of cirrhosis and liver cancer (hepatocellular carcinoma). Most of cytosolic activities involve modulation of cytosolic calcium. The effect on apoptosis is controversial depending on the cell types in which the studies have been conducted. May induce apoptosis by localizing in mitochondria and causing loss of mitochondrial membrane potential. May also modulate apoptosis by binding host CFLAR, a key regulator of the death-inducing signaling complex (DISC). Promotes viral transcription by using the host E3 ubiquitin ligase DDB1 to target the SMC5-SMC6 complex to proteasomal degradation. This host complex would otherwise bind to viral episomal DNA, and prevents its transcription. Moderately stimulates transcription of many different viral and cellular transcription elements. Promoters and enhancers stimulated by HBx contain DNA binding sites for NF-kappa-B, AP-1, AP-2, c-EBP, ATF/CREB, or the calcium-activated factor NF-AT. The sequence is that of Protein X from Homo sapiens (Human).